We begin with the raw amino-acid sequence, 81 residues long: Cytotoxin 1d/1e (81 aa).

The N-terminal stretch at 1 to 21 is a signal peptide; it reads MKTLLLTLVVVTIVCLDLGYT. Disulfide bonds link Cys-24/Cys-42, Cys-35/Cys-59, Cys-63/Cys-74, and Cys-75/Cys-80.

Belongs to the three-finger toxin family. Short-chain subfamily. Type IA cytotoxin sub-subfamily. Monomer in solution; Homodimer and oligomer in the presence of negatively charged lipids forming a pore with a size ranging between 20 and 30 Angstroms. As to expression, expressed by the venom gland.

Its subcellular location is the secreted. The protein localises to the target cell membrane. Functionally, shows cytolytic activity on many different cells by forming pore in lipid membranes. In vivo, increases heart rate or kills the animal by cardiac arrest. In addition, it binds to heparin with high affinity, interacts with Kv channel-interacting protein 1 (KCNIP1) in a calcium-independent manner, and binds to integrin alpha-V/beta-3 (ITGAV/ITGB3) with moderate affinity. The protein is Cytotoxin 1d/1e of Naja atra (Chinese cobra).